Reading from the N-terminus, the 349-residue chain is Protein-glutamate methylesterase/protein-glutamine glutaminase 3 (349 aa).

Positions 2 to 119 (DVLIVDDSPV…HPDFERDVES (118 aa)) constitute a Response regulatory domain. The residue at position 52 (D52) is a 4-aspartylphosphate. The CheB-type methylesterase domain maps to 157–340 (EGFQPGVIAI…LSPPRIAALL (184 aa)). Residues S169, H196, and D289 contribute to the active site.

This sequence belongs to the CheB family. Post-translationally, phosphorylated by CheA. Phosphorylation of the N-terminal regulatory domain activates the methylesterase activity.

It is found in the cytoplasm. The enzyme catalyses [protein]-L-glutamate 5-O-methyl ester + H2O = L-glutamyl-[protein] + methanol + H(+). The catalysed reaction is L-glutaminyl-[protein] + H2O = L-glutamyl-[protein] + NH4(+). Its function is as follows. Involved in chemotaxis. Part of a chemotaxis signal transduction system that modulates chemotaxis in response to various stimuli. Catalyzes the demethylation of specific methylglutamate residues introduced into the chemoreceptors (methyl-accepting chemotaxis proteins or MCP) by CheR. Also mediates the irreversible deamidation of specific glutamine residues to glutamic acid. This chain is Protein-glutamate methylesterase/protein-glutamine glutaminase 3, found in Hahella chejuensis (strain KCTC 2396).